We begin with the raw amino-acid sequence, 383 residues long: Succinate--CoA ligase [ADP-forming] subunit beta (383 aa).

The region spanning 9–236 (KELLGRFGLR…VEAADPQEHR (228 aa)) is the ATP-grasp domain. ATP-binding positions include Lys45, 52–54 (GRG), Glu91, Ala94, and Glu99. Mg(2+)-binding residues include Asn191 and Asp205. Substrate-binding positions include Asn256 and 313-315 (GIT).

It belongs to the succinate/malate CoA ligase beta subunit family. Heterotetramer of two alpha and two beta subunits. Mg(2+) is required as a cofactor.

It carries out the reaction succinate + ATP + CoA = succinyl-CoA + ADP + phosphate. The catalysed reaction is GTP + succinate + CoA = succinyl-CoA + GDP + phosphate. Its pathway is carbohydrate metabolism; tricarboxylic acid cycle; succinate from succinyl-CoA (ligase route): step 1/1. Its function is as follows. Succinyl-CoA synthetase functions in the citric acid cycle (TCA), coupling the hydrolysis of succinyl-CoA to the synthesis of either ATP or GTP and thus represents the only step of substrate-level phosphorylation in the TCA. The beta subunit provides nucleotide specificity of the enzyme and binds the substrate succinate, while the binding sites for coenzyme A and phosphate are found in the alpha subunit. This is Succinate--CoA ligase [ADP-forming] subunit beta from Rubrobacter xylanophilus (strain DSM 9941 / JCM 11954 / NBRC 16129 / PRD-1).